A 252-amino-acid chain; its full sequence is Probable transcriptional regulatory protein Npun_R5651 (252 aa).

Belongs to the TACO1 family.

It localises to the cytoplasm. This Nostoc punctiforme (strain ATCC 29133 / PCC 73102) protein is Probable transcriptional regulatory protein Npun_R5651.